Here is a 1115-residue protein sequence, read N- to C-terminus: Lateral signaling target protein 2 homolog (1115 aa).

Disordered regions lie at residues proline 308–serine 488, serine 545–serine 586, arginine 600–aspartate 742, and valine 879–lysine 1027. Residues asparagine 322 to threonine 361 are compositionally biased toward low complexity. The span at lysine 363–asparagine 373 shows a compositional bias: basic and acidic residues. 2 stretches are compositionally biased toward low complexity: residues asparagine 374–alanine 417 and proline 425–alanine 444. Positions tyrosine 449–serine 488 are enriched in acidic residues. 2 stretches are compositionally biased toward low complexity: residues glutamine 558–glutamine 577 and arginine 600–asparagine 614. A phosphoserine mark is found at serine 603 and serine 604. Residues glutamine 615–threonine 628 are compositionally biased toward polar residues. Basic residues predominate over residues serine 632 to glutamine 655. Residues alanine 658–histidine 676 show a composition bias toward low complexity. Residues serine 677–arginine 706 are compositionally biased toward basic residues. Low complexity-rich tracts occupy residues threonine 714 to glutamine 726, aspartate 733 to aspartate 742, and serine 881 to serine 901. Serine 908 carries the phosphoserine modification. Low complexity-rich tracts occupy residues glutamine 921–serine 975 and threonine 988–proline 1020. An FYVE-type zinc finger spans residues aspartate 1025–valine 1085. Residues cysteine 1031, cysteine 1034, cysteine 1047, cysteine 1050, cysteine 1055, cysteine 1058, cysteine 1077, and cysteine 1080 each contribute to the Zn(2+) site. The disordered stretch occupies residues serine 1088 to serine 1115. Low complexity predominate over residues serine 1090–serine 1100.

The protein belongs to the lst-2 family.

In terms of biological role, negative regulator of epidermal growth factor receptor (EGFR) signaling. The chain is Lateral signaling target protein 2 homolog from Drosophila grimshawi (Hawaiian fruit fly).